The primary structure comprises 256 residues: H-2 class II histocompatibility antigen, A-D alpha chain (256 aa).

Residues 1–23 (MPCSRALILGVLALNTMLSLCGG) form the signal peptide. An alpha-1 region spans residues 24–111 (EDDIEADHVG…KRSNFTPATN (88 aa)). The Extracellular portion of the chain corresponds to 24-218 (EDDIEADHVG…IPAPMSELTE (195 aa)). Positions 112–205 (EAPQATVFPK…GLEEPVLKHW (94 aa)) are alpha-2. Residues 114–206 (PQATVFPKSP…LEEPVLKHWE (93 aa)) enclose the Ig-like C1-type domain. Cys-134 and Cys-190 are joined by a disulfide. N-linked (GlcNAc...) asparagine glycosylation occurs at Asn-145. A connecting peptide region spans residues 206–218 (EPEIPAPMSELTE). A helical membrane pass occupies residues 219–244 (TVVCALGLSVGLVGIVVGTIFIIQGL). Residues 245 to 256 (RSGGTSRHPGPL) lie on the Cytoplasmic side of the membrane.

It belongs to the MHC class II family.

Its subcellular location is the membrane. This Mus musculus (Mouse) protein is H-2 class II histocompatibility antigen, A-D alpha chain (H2-Aa).